Reading from the N-terminus, the 29-residue chain is Alpha-amylase inhibitor 2 (29 aa).

The protein belongs to the protease inhibitor I6 (cereal trypsin/alpha-amylase inhibitor) family.

The protein localises to the secreted. Its function is as follows. Alpha-amylase inhibitor. This Saussurea costus (Costus) protein is Alpha-amylase inhibitor 2.